Reading from the N-terminus, the 390-residue chain is Probable NADH-dependent butanol dehydrogenase 2 (390 aa).

It belongs to the iron-containing alcohol dehydrogenase family.

It participates in alcohol metabolism; butanol biosynthesis. In Bacillus subtilis (strain 168), this protein is Probable NADH-dependent butanol dehydrogenase 2 (yugK).